A 228-amino-acid chain; its full sequence is U1 small nuclear ribonucleoprotein C-2 (228 aa).

The segment at 4-36 adopts a Matrin-type zinc-finger fold; it reads YYCDYCDTYLTHDSPSVRKQHNAGYKHKANVRT. The interval 105–228 is disordered; it reads PGVRPPILPA…SYALPSEGNH (124 aa). Pro residues-rich tracts occupy residues 107–156 and 164–175; these read VRPP…PPGS and LPRPPTLPPPTS. Residues 178–190 are compositionally biased toward low complexity; that stretch reads PGAPIPNSAAPPA. The segment covering 196-214 has biased composition (pro residues); the sequence is PPAPAGPTSGAPPAPPTAP.

This sequence belongs to the U1 small nuclear ribonucleoprotein C family. In terms of assembly, U1 snRNP is composed of the 7 core Sm proteins B/B', D1, D2, D3, E, F and G that assemble in a heptameric protein ring on the Sm site of the small nuclear RNA to form the core snRNP, and at least 3 U1 snRNP-specific proteins U1-70K, U1-A and U1-C. U1-C interacts with U1 snRNA and the 5' splice-site region of the pre-mRNA.

The protein localises to the nucleus. Functionally, component of the spliceosomal U1 snRNP, which is essential for recognition of the pre-mRNA 5' splice-site and the subsequent assembly of the spliceosome. U1-C is directly involved in initial 5' splice-site recognition for both constitutive and regulated alternative splicing. The interaction with the 5' splice-site seems to precede base-pairing between the pre-mRNA and the U1 snRNA. Stimulates commitment or early (E) complex formation by stabilizing the base pairing of the 5' end of the U1 snRNA and the 5' splice-site region. This is U1 small nuclear ribonucleoprotein C-2 from Sorghum bicolor (Sorghum).